A 1373-amino-acid polypeptide reads, in one-letter code: DNA-directed RNA polymerase subunit beta (1373 aa).

This sequence belongs to the RNA polymerase beta chain family. As to quaternary structure, the RNAP catalytic core consists of 2 alpha, 1 beta, 1 beta' and 1 omega subunit. When a sigma factor is associated with the core the holoenzyme is formed, which can initiate transcription.

It catalyses the reaction RNA(n) + a ribonucleoside 5'-triphosphate = RNA(n+1) + diphosphate. In terms of biological role, DNA-dependent RNA polymerase catalyzes the transcription of DNA into RNA using the four ribonucleoside triphosphates as substrates. The protein is DNA-directed RNA polymerase subunit beta of Rickettsia felis (strain ATCC VR-1525 / URRWXCal2) (Rickettsia azadi).